The chain runs to 358 residues: Type II restriction enzyme HpaII (358 aa).

In terms of assembly, homodimer.

It catalyses the reaction Endonucleolytic cleavage of DNA to give specific double-stranded fragments with terminal 5'-phosphates.. Functionally, an E and P subtype restriction enzyme that recognizes the double-stranded sequence 5'-CCGG-3' and cleaves after C-1. The polypeptide is Type II restriction enzyme HpaII (Haemophilus parainfluenzae).